We begin with the raw amino-acid sequence, 732 residues long: Catalase-peroxidase (732 aa).

Residues 1 to 21 (MSMAEMRCPFSGHGAATTPAS) are disordered. The N-terminal stretch at 1–22 (MSMAEMRCPFSGHGAATTPASA) is a signal peptide. Positions 97-220 (WHSAGTYRLA…LAATEMGLIY (124 aa)) form a cross-link, tryptophyl-tyrosyl-methioninium (Trp-Tyr) (with M-246). His98 acts as the Proton acceptor in catalysis. The segment at residues 220-246 (YVNPEGPHGEPDPVASGREVRDTFARM) is a cross-link (tryptophyl-tyrosyl-methioninium (Tyr-Met) (with W-97)). His261 serves as a coordination point for heme b.

It belongs to the peroxidase family. Peroxidase/catalase subfamily. As to quaternary structure, homodimer or homotetramer. Heme b is required as a cofactor. Post-translationally, formation of the three residue Trp-Tyr-Met cross-link is important for the catalase, but not the peroxidase activity of the enzyme.

It catalyses the reaction H2O2 + AH2 = A + 2 H2O. The catalysed reaction is 2 H2O2 = O2 + 2 H2O. Its function is as follows. Bifunctional enzyme with both catalase and broad-spectrum peroxidase activity. This chain is Catalase-peroxidase, found in Synechococcus sp. (strain RCC307).